The primary structure comprises 183 residues: Protein jagunal homolog 1 (183 aa).

The Cytoplasmic segment spans residues 1–39 (MASRAGPRAAGTDGSDFQHRERVAMHYQMSVTLKYEIKK). S3 bears the Phosphoserine mark. The chain crosses the membrane as a helical span at residues 40-60 (LIYVHLVIWLLLVAKMSVGHL). At 61–71 (RLLSHDQVAMP) the chain is on the lumenal side. A helical transmembrane segment spans residues 72–92 (YQWEYPYLLSVVPSLLGLLSF). At 93–96 (PRNN) the chain is on the cytoplasmic side. The helical transmembrane segment at 97–117 (ISYLVLSMISMGLFSIAPLIY) threads the bilayer. The Lumenal portion of the chain corresponds to 118-137 (GSMEMFPAAQQLYRHGKAYR). A helical membrane pass occupies residues 138-158 (FLFGFSAVSVMYLVLVLAVQV). Residues 159 to 183 (HAWQLYYSKKLLDSWFTSTQEKKRK) lie on the Cytoplasmic side of the membrane.

This sequence belongs to the jagunal family. Interacts with COPA, COPB2 and COPG2.

The protein localises to the endoplasmic reticulum membrane. Functionally, endoplasmic reticulum transmembrane protein involved in vesicle-mediated transport, which is required for neutrophil function. Required for vesicle-mediated transport; it is however unclear whether it is involved in early secretory pathway or intracellular protein transport. Acts as a regulator of neutrophil function, probably via its role in vesicle-mediated transport: required for defense against fungal pathogens and for granulocyte colony-stimulating factor (GM-CSF) signaling pathway; possibly by regulating glycosylation and/or targeting of proteins contributing to the viability and migration of neutrophils. In Bos taurus (Bovine), this protein is Protein jagunal homolog 1 (JAGN1).